A 302-amino-acid polypeptide reads, in one-letter code: 2-phosphoglycerate kinase (302 aa).

One can recognise an ATP-cone domain in the interval 2 to 89 (IKVIERDGKV…FWRRFRKLKI (88 aa)).

Belongs to the 2-phosphoglycerate kinase family. Requires a divalent metal cation as cofactor.

The catalysed reaction is (2R)-2-phosphoglycerate + ATP = (2R)-2,3-bisphosphoglycerate + ADP + H(+). Its pathway is thermoadapter biosynthesis; cyclic 2,3-diphosphoglycerate biosynthesis; cyclic 2,3-diphosphoglycerate from 2-phospho-D-glycerate: step 1/2. In terms of biological role, catalyzes the phosphorylation of 2-phosphoglycerate to 2,3-diphosphoglycerate. Involved in the biosynthesis of cyclic 2,3-bisphosphoglycerate, a thermoprotectant. This is 2-phosphoglycerate kinase from Pyrococcus furiosus (strain ATCC 43587 / DSM 3638 / JCM 8422 / Vc1).